Consider the following 91-residue polypeptide: Late embryogenis abundant protein 2 (91 aa).

The tract at residues 47–72 is disordered; that stretch reads KRAGEASSEKAPWVPDPKTGYYRPET.

The protein belongs to the LEA type 3 family.

It is found in the cytoplasm. Its subcellular location is the nucleus. This is Late embryogenis abundant protein 2 from Arabidopsis thaliana (Mouse-ear cress).